We begin with the raw amino-acid sequence, 296 residues long: tRNA uridine(34) hydroxylase (296 aa).

In terms of domain architecture, Rhodanese spans 132 to 226 (AGRPVVMLDT…YFEEVGGAHY (95 aa)). The active-site Cysteine persulfide intermediate is the Cys186.

The protein belongs to the TrhO family.

The catalysed reaction is uridine(34) in tRNA + AH2 + O2 = 5-hydroxyuridine(34) in tRNA + A + H2O. In terms of biological role, catalyzes oxygen-dependent 5-hydroxyuridine (ho5U) modification at position 34 in tRNAs. This is tRNA uridine(34) hydroxylase from Burkholderia thailandensis (strain ATCC 700388 / DSM 13276 / CCUG 48851 / CIP 106301 / E264).